The following is a 376-amino-acid chain: Putative F-box protein At2g33200 (376 aa).

Residues Tyr6–Arg53 enclose the F-box domain.

The protein is Putative F-box protein At2g33200 of Arabidopsis thaliana (Mouse-ear cress).